A 494-amino-acid chain; its full sequence is Alpha-amylase B (494 aa).

An N-terminal signal peptide occupies residues 1–18 (MFLAKSIVCLALLAVANA). The residue at position 19 (Gln19) is a Pyrrolidone carboxylic acid. A disulfide bridge connects residues Cys46 and Cys102. Ca(2+) is bound by residues Asn116, Arg165, and Asp174. Cys153 and Cys167 are disulfide-bonded. Arg202 serves as a coordination point for chloride. The active-site Nucleophile is the Asp204. Residue His208 coordinates Ca(2+). Glu241 serves as the catalytic Proton donor. Residues Asn304 and Arg343 each contribute to the chloride site. 2 cysteine pairs are disulfide-bonded: Cys376/Cys382 and Cys448/Cys460.

Belongs to the glycosyl hydrolase 13 family. In terms of assembly, monomer. The cofactor is Ca(2+). It depends on chloride as a cofactor.

It carries out the reaction Endohydrolysis of (1-&gt;4)-alpha-D-glucosidic linkages in polysaccharides containing three or more (1-&gt;4)-alpha-linked D-glucose units.. In Drosophila melanogaster (Fruit fly), this protein is Alpha-amylase B (Amy-d).